Reading from the N-terminus, the 100-residue chain is Aspartyl/glutamyl-tRNA(Asn/Gln) amidotransferase subunit C (100 aa).

This sequence belongs to the GatC family. As to quaternary structure, heterotrimer of A, B and C subunits.

It carries out the reaction L-glutamyl-tRNA(Gln) + L-glutamine + ATP + H2O = L-glutaminyl-tRNA(Gln) + L-glutamate + ADP + phosphate + H(+). It catalyses the reaction L-aspartyl-tRNA(Asn) + L-glutamine + ATP + H2O = L-asparaginyl-tRNA(Asn) + L-glutamate + ADP + phosphate + 2 H(+). Functionally, allows the formation of correctly charged Asn-tRNA(Asn) or Gln-tRNA(Gln) through the transamidation of misacylated Asp-tRNA(Asn) or Glu-tRNA(Gln) in organisms which lack either or both of asparaginyl-tRNA or glutaminyl-tRNA synthetases. The reaction takes place in the presence of glutamine and ATP through an activated phospho-Asp-tRNA(Asn) or phospho-Glu-tRNA(Gln). The sequence is that of Aspartyl/glutamyl-tRNA(Asn/Gln) amidotransferase subunit C from Novosphingobium aromaticivorans (strain ATCC 700278 / DSM 12444 / CCUG 56034 / CIP 105152 / NBRC 16084 / F199).